Reading from the N-terminus, the 76-residue chain is Putative defensin-like protein 121 (76 aa).

The signal sequence occupies residues 1–26; that stretch reads MTYKATILAIFMIILVLGIGTKETRG. 4 cysteine pairs are disulfide-bonded: C30–C74, C39–C59, C44–C68, and C48–C70.

Belongs to the DEFL family.

Its subcellular location is the secreted. The protein is Putative defensin-like protein 121 (LCR55) of Arabidopsis thaliana (Mouse-ear cress).